Here is a 317-residue protein sequence, read N- to C-terminus: Ribosomal RNA small subunit methyltransferase H (317 aa).

S-adenosyl-L-methionine is bound by residues 37–39, aspartate 56, phenylalanine 85, aspartate 106, and glutamine 113; that span reads AGH.

Belongs to the methyltransferase superfamily. RsmH family.

Its subcellular location is the cytoplasm. The enzyme catalyses cytidine(1402) in 16S rRNA + S-adenosyl-L-methionine = N(4)-methylcytidine(1402) in 16S rRNA + S-adenosyl-L-homocysteine + H(+). Functionally, specifically methylates the N4 position of cytidine in position 1402 (C1402) of 16S rRNA. This chain is Ribosomal RNA small subunit methyltransferase H, found in Lactococcus lactis subsp. cremoris (strain SK11).